A 54-amino-acid chain; its full sequence is Large ribosomal subunit protein eL37 (54 aa).

Residues C20, C23, C35, and C38 each contribute to the Zn(2+) site. The C4-type zinc finger occupies 20-38 (CRRCGHHTYNVRTKRCSHC).

It belongs to the eukaryotic ribosomal protein eL37 family. It depends on Zn(2+) as a cofactor.

Binds to the 23S rRNA. The chain is Large ribosomal subunit protein eL37 (rpl37e) from Thermoplasma volcanium (strain ATCC 51530 / DSM 4299 / JCM 9571 / NBRC 15438 / GSS1).